Reading from the N-terminus, the 176-residue chain is Large ribosomal subunit protein bL17 (176 aa).

The disordered stretch occupies residues 124–176 (AAPKAARQDRSKRVKGSRKTEASAAKAAPAAQAAPELPAESDAPAAEAAPTEE). The span at 145–176 (ASAAKAAPAAQAAPELPAESDAPAAEAAPTEE) shows a compositional bias: low complexity.

This sequence belongs to the bacterial ribosomal protein bL17 family. As to quaternary structure, part of the 50S ribosomal subunit. Contacts protein L32.

This Chlorobium phaeovibrioides (strain DSM 265 / 1930) (Prosthecochloris vibrioformis (strain DSM 265)) protein is Large ribosomal subunit protein bL17.